We begin with the raw amino-acid sequence, 486 residues long: Cardiolipin synthase A (486 aa).

The next 2 helical transmembrane spans lie at Thr-3 to Val-23 and Met-38 to Phe-58. PLD phosphodiesterase domains are found at residues Met-219–Arg-246 and Glu-399–Ser-426. Catalysis depends on residues His-224, Lys-226, Asp-231, His-404, Lys-406, and Asp-411.

It belongs to the phospholipase D family. Cardiolipin synthase subfamily. ClsA sub-subfamily.

It localises to the cell inner membrane. The catalysed reaction is 2 a 1,2-diacyl-sn-glycero-3-phospho-(1'-sn-glycerol) = a cardiolipin + glycerol. Its function is as follows. Catalyzes the reversible phosphatidyl group transfer from one phosphatidylglycerol molecule to another to form cardiolipin (CL) (diphosphatidylglycerol) and glycerol. The sequence is that of Cardiolipin synthase A from Klebsiella pneumoniae subsp. pneumoniae (strain ATCC 700721 / MGH 78578).